A 381-amino-acid polypeptide reads, in one-letter code: L-lactate dehydrogenase (381 aa).

The FMN hydroxy acid dehydrogenase domain maps to 1-380; it reads MIISASTDYR…SRDSLVRELG (380 aa). Tyr-24 contributes to the substrate binding site. FMN is bound by residues Ser-106 and Gln-127. Tyr-129 contributes to the substrate binding site. Thr-155 contacts FMN. Arg-164 is a substrate binding site. Residue Lys-251 participates in FMN binding. Catalysis depends on His-275, which acts as the Proton acceptor. Arg-278 is a substrate binding site. An FMN-binding site is contributed by 306-330; it reads DSGIRSGLDVVRMIALGADTVLIGR.

This sequence belongs to the FMN-dependent alpha-hydroxy acid dehydrogenase family. Homotetramer. The cofactor is FMN.

Its subcellular location is the cell inner membrane. It carries out the reaction (S)-lactate + A = pyruvate + AH2. Catalyzes the conversion of L-lactate to pyruvate. Is coupled to the respiratory chain. In Pseudomonas putida (strain W619), this protein is L-lactate dehydrogenase.